Consider the following 669-residue polypeptide: Cysteine-rich receptor-like protein kinase 10 (669 aa).

The first 34 residues, 1 to 34 (MRRNTDQESPIMSYYSSFFFLFLFSFLTSFRVSA), serve as a signal peptide directing secretion. Residues 35–285 (QDPTYVYHTC…PRSGKDGNSK (251 aa)) are Extracellular-facing. Gnk2-homologous domains are found at residues 38 to 142 (TYVY…NQNI) and 148 to 252 (TTGG…IYAF). Asn-49, Asn-53, Asn-71, and Asn-80 each carry an N-linked (GlcNAc...) asparagine glycan. Intrachain disulfides connect Cys-96/Cys-105 and Cys-108/Cys-133. 4 N-linked (GlcNAc...) asparagine glycosylation sites follow: Asn-114, Asn-159, Asn-185, and Asn-196. Intrachain disulfides connect Cys-209–Cys-218 and Cys-221–Cys-243. The span at 260–274 (PPPPPPSISTPPVSA) shows a compositional bias: pro residues. The interval 260–280 (PPPPPPSISTPPVSAPPRSGK) is disordered. A helical transmembrane segment spans residues 286–306 (VLVIAIVVPIIVAVLLFIAGY). Residues 307–669 (CFLTRRARKS…DASITDIHPR (363 aa)) lie on the Cytoplasmic side of the membrane. One can recognise a Protein kinase domain in the interval 348 to 634 (FVESNKIGQG…TLPVPRQPGL (287 aa)). ATP contacts are provided by residues 354–362 (IGQGGFGEV) and Lys-376. Tyr-421 is subject to Phosphotyrosine. Asp-473 (proton acceptor) is an active-site residue. Ser-477 is modified (phosphoserine). Phosphothreonine is present on Thr-513. The residue at position 521 (Tyr-521) is a Phosphotyrosine.

This sequence belongs to the protein kinase superfamily. Ser/Thr protein kinase family. CRK subfamily. As to quaternary structure, interacts with CRKIP1 (KAPP), CRKIP2 and CRKIP3, three kinase-associated type 2C proteins.

Its subcellular location is the membrane. It carries out the reaction L-seryl-[protein] + ATP = O-phospho-L-seryl-[protein] + ADP + H(+). The enzyme catalyses L-threonyl-[protein] + ATP = O-phospho-L-threonyl-[protein] + ADP + H(+). This Arabidopsis thaliana (Mouse-ear cress) protein is Cysteine-rich receptor-like protein kinase 10 (CRK10).